We begin with the raw amino-acid sequence, 398 residues long: MIIHSLLDTDLYKFTMMQAVLHQHPAAQVDYRFKCRTPGVDLAQFIDEISREIDALCRLRLREDEVDYLRSLRFIKPDFADFLALFHLDRKYLTLAASAAHPGEIELTIRGPWLHTILFEVPLLAIINEVWFRNTSEPDFEEGRSRLREKVRSLRSMPAGCKIADYGTRRRYSRQWHGELLPLLRDGLGEQFVGTSNVFFAKQYGLTPLGTMAHEYLQAFQALGPRLRDSQVAALDSWAREYRGDLGIALSDVVGLDAFLRDFDLYFCKLFDGMRHDSGDPFEWGERVIAHLEAHRVDPRTKVLVFSDGLNIDKVMRLYEHFSPRCRLAFGVGTSLTNDLGPTPLQIVIKMVRCNGQPVAKLSDSPGKSMCEDLGYLRYLRDVFGLPPMPEAGDPARQ.

His214 is modified (phosphohistidine; by autocatalysis).

This sequence belongs to the NAPRTase family. In terms of processing, transiently phosphorylated on a His residue during the reaction cycle. Phosphorylation strongly increases the affinity for substrates and increases the rate of nicotinate D-ribonucleotide production. Dephosphorylation regenerates the low-affinity form of the enzyme, leading to product release.

It carries out the reaction nicotinate + 5-phospho-alpha-D-ribose 1-diphosphate + ATP + H2O = nicotinate beta-D-ribonucleotide + ADP + phosphate + diphosphate. It functions in the pathway cofactor biosynthesis; NAD(+) biosynthesis; nicotinate D-ribonucleotide from nicotinate: step 1/1. Functionally, catalyzes the synthesis of beta-nicotinate D-ribonucleotide from nicotinate and 5-phospho-D-ribose 1-phosphate at the expense of ATP. The chain is Nicotinate phosphoribosyltransferase from Xanthomonas campestris pv. campestris (strain B100).